The chain runs to 166 residues: uncharacterized protein (166 aa).

In terms of biological role, this protein may be involved in virus assembly. Essential for virus function. This is an uncharacterized protein from Sulfolobus spindle-shape virus 1 (SSV1).